The primary structure comprises 251 residues: Imidazole glycerol phosphate synthase subunit HisF (251 aa).

Residues Asp-11 and Asp-130 contribute to the active site.

Belongs to the HisA/HisF family. As to quaternary structure, heterodimer of HisH and HisF.

The protein localises to the cytoplasm. It carries out the reaction 5-[(5-phospho-1-deoxy-D-ribulos-1-ylimino)methylamino]-1-(5-phospho-beta-D-ribosyl)imidazole-4-carboxamide + L-glutamine = D-erythro-1-(imidazol-4-yl)glycerol 3-phosphate + 5-amino-1-(5-phospho-beta-D-ribosyl)imidazole-4-carboxamide + L-glutamate + H(+). The protein operates within amino-acid biosynthesis; L-histidine biosynthesis; L-histidine from 5-phospho-alpha-D-ribose 1-diphosphate: step 5/9. IGPS catalyzes the conversion of PRFAR and glutamine to IGP, AICAR and glutamate. The HisF subunit catalyzes the cyclization activity that produces IGP and AICAR from PRFAR using the ammonia provided by the HisH subunit. The sequence is that of Imidazole glycerol phosphate synthase subunit HisF from Chloroherpeton thalassium (strain ATCC 35110 / GB-78).